Here is a 567-residue protein sequence, read N- to C-terminus: 2-isopropylmalate synthase (567 aa).

Residues 28-302 enclose the Pyruvate carboxyltransferase domain; it reads PQWCSVDLRD…NPELDFSDIN (275 aa). Residues Asp-37, His-241, His-243, and Asn-277 each contribute to the Mg(2+) site. The interval 435–567 is regulatory domain; that stretch reads IRTPLQLNYH…DMDTQEEDIA (133 aa).

It belongs to the alpha-IPM synthase/homocitrate synthase family. LeuA type 2 subfamily. Homodimer. Requires Mg(2+) as cofactor.

It localises to the cytoplasm. The catalysed reaction is 3-methyl-2-oxobutanoate + acetyl-CoA + H2O = (2S)-2-isopropylmalate + CoA + H(+). Its pathway is amino-acid biosynthesis; L-leucine biosynthesis; L-leucine from 3-methyl-2-oxobutanoate: step 1/4. Catalyzes the condensation of the acetyl group of acetyl-CoA with 3-methyl-2-oxobutanoate (2-ketoisovalerate) to form 3-carboxy-3-hydroxy-4-methylpentanoate (2-isopropylmalate). The chain is 2-isopropylmalate synthase from Acetoanaerobium sticklandii (strain ATCC 12662 / DSM 519 / JCM 1433 / CCUG 9281 / NCIMB 10654 / HF) (Clostridium sticklandii).